We begin with the raw amino-acid sequence, 324 residues long: Beta-ketoacyl-[acyl-carrier-protein] synthase III (324 aa).

Catalysis depends on residues Cys-116 and His-251. The segment at 252 to 256 is ACP-binding; that stretch reads QANLR. Asn-281 is a catalytic residue.

The protein belongs to the thiolase-like superfamily. FabH family. In terms of assembly, homodimer.

The protein localises to the cytoplasm. It carries out the reaction malonyl-[ACP] + acetyl-CoA + H(+) = 3-oxobutanoyl-[ACP] + CO2 + CoA. It participates in lipid metabolism; fatty acid biosynthesis. Catalyzes the condensation reaction of fatty acid synthesis by the addition to an acyl acceptor of two carbons from malonyl-ACP. Catalyzes the first condensation reaction which initiates fatty acid synthesis and may therefore play a role in governing the total rate of fatty acid production. Possesses both acetoacetyl-ACP synthase and acetyl transacylase activities. Its substrate specificity determines the biosynthesis of branched-chain and/or straight-chain of fatty acids. This chain is Beta-ketoacyl-[acyl-carrier-protein] synthase III, found in Xylella fastidiosa (strain 9a5c).